A 364-amino-acid chain; its full sequence is MITAEKKKKNKFLPNFDKQSIYSLRFDEMQNWLVEQGQQKFRAKQIFEWLYQKRVDSIDEMTNLSKDLRQLLKDNFTVTTLTTVVKQESKDGTIKFLFELQDGYTIETVLMRHDYGNSVCVTTQVGCRIGCTFCASTLGGLKRNLEAGEIVSQVLTVQKALDATEERVSQIVIMGIGEPFENYDEMMDFLRIVNDDNSLNIGARHITVSTSGIIPRIYDFADEDIQINFAVSLHAAKDEVRSRLMPINRAYNVEKLIEAIQYYQEKTNRRVTFEYGLFGGVNDQLEHARELAHLIKGLNCHVNLIPVNHVPERNYVKTAKNDIFKFEKELKRLGINATIRREQGSDIDAACGQLRAKERQVETR.

Glutamate 107 acts as the Proton acceptor in catalysis. The Radical SAM core domain occupies 113–346 (HDYGNSVCVT…ATIRREQGSD (234 aa)). Residues cysteine 120 and cysteine 351 are joined by a disulfide bond. [4Fe-4S] cluster is bound by residues cysteine 127, cysteine 131, and cysteine 134. S-adenosyl-L-methionine contacts are provided by residues 177-178 (GE), serine 209, 232-234 (SLH), and asparagine 308. Cysteine 351 acts as the S-methylcysteine intermediate in catalysis.

This sequence belongs to the radical SAM superfamily. RlmN family. The cofactor is [4Fe-4S] cluster.

It localises to the cytoplasm. It carries out the reaction adenosine(2503) in 23S rRNA + 2 reduced [2Fe-2S]-[ferredoxin] + 2 S-adenosyl-L-methionine = 2-methyladenosine(2503) in 23S rRNA + 5'-deoxyadenosine + L-methionine + 2 oxidized [2Fe-2S]-[ferredoxin] + S-adenosyl-L-homocysteine. It catalyses the reaction adenosine(37) in tRNA + 2 reduced [2Fe-2S]-[ferredoxin] + 2 S-adenosyl-L-methionine = 2-methyladenosine(37) in tRNA + 5'-deoxyadenosine + L-methionine + 2 oxidized [2Fe-2S]-[ferredoxin] + S-adenosyl-L-homocysteine. Functionally, specifically methylates position 2 of adenine 2503 in 23S rRNA and position 2 of adenine 37 in tRNAs. Confers resistance to some classes of antibiotics. In Staphylococcus aureus (strain Mu3 / ATCC 700698), this protein is Probable dual-specificity RNA methyltransferase RlmN.